Consider the following 138-residue polypeptide: Putative ribonuclease VapC45 (138 aa).

Toxic component of a type II toxin-antitoxin (TA) system. An RNase. The cognate antitoxin is VapB45. The chain is Putative ribonuclease VapC45 from Mycobacterium tuberculosis (strain ATCC 25618 / H37Rv).